Reading from the N-terminus, the 1144-residue chain is Guanine nucleotide-binding protein G(s) subunit alpha isoforms XLas (1144 aa).

Disordered stretches follow at residues 1–186 (MGML…LAPG), 316–558 (DDDT…PAAG), 622–657 (SASA…SAWP), and 735–772 (RSRS…DKKR). The span at 31–46 (LEAQGAAAPGAGVGPA) shows a compositional bias: low complexity. The span at 343–356 (KSEHAKRPPLERQA) shows a compositional bias: basic and acidic residues. The segment covering 358–369 (ETGNSPISSTTA) has biased composition (polar residues). Positions 370–381 (EEAKVPSLERGE) are enriched in basic and acidic residues. Low complexity-rich tracts occupy residues 467–499 (PAAA…AAEA) and 518–558 (EPAA…PAAG). Pro residues predominate over residues 644-654 (PPTPRPAPRPS). Over residues 743–767 (KAKDPMEERRKQMRKEAMEMREQKR) the composition is skewed to basic and acidic residues. Residues 745 to 772 (KDPMEERRKQMRKEAMEMREQKRADKKR) are a coiled coil. Residues 789–1144 (CTHRLLLLGA…RMHLRQYELL (356 aa)) enclose the G-alpha domain. The G1 motif stretch occupies residues 792-805 (RLLLLGAGESGKST). 797 to 805 (GAGESGKST) contacts GTP. Ser804 lines the Mg(2+) pocket. The tract at residues 818 to 840 (FNGEGGEEDPQAARSNSDGEKAT) is disordered. A coiled-coil region spans residues 837–863 (EKATKVQDIKNNLKEAIETIVAAMSNL). The G2 motif stretch occupies residues 946–954 (DLPRCRVLT). GTP-binding positions include 947–954 (LPRCRVLT), 973–977 (DVGGQ), and 1042–1045 (NKQD). An ADP-ribosylarginine; by cholera toxin modification is found at Arg951. Thr954 serves as a coordination point for Mg(2+). The interval 969 to 978 (FHMFDVGGQR) is G3 motif. The tract at residues 1038-1045 (ILFLNKQD) is G4 motif. Residue Ser1102 is modified to Phosphoserine. The interval 1114 to 1119 (TCAVDT) is G5 motif. Residue Ala1116 coordinates GTP.

This sequence belongs to the G-alpha family. G(s) subfamily. As to quaternary structure, g proteins are composed of 3 units; alpha, beta and gamma. The alpha chain contains the guanine nucleotide binding site. Interacts through its N-terminal region with ALEX which is produced from the same locus in a different open reading frame. This interaction may inhibit its adenylyl cyclase-stimulating activity. Interacts with MAGED2. Enriched in neuroendocrine tissues with a particularly high level of expression in pituitary where it is abundant in intermediate and anterior lobes. In adrenal gland, found in central region containing medullary chromaffin cells but not in cortex. In cerebellum, strongly expressed in perikarya of Purkinje cells. Not detected in liver, kidney or neurohypophysis.

The protein resides in the cell membrane. Its subcellular location is the apical cell membrane. Guanine nucleotide-binding proteins (G proteins) function as transducers in numerous signaling pathways controlled by G protein-coupled receptors (GPCRs). Signaling involves the activation of adenylyl cyclases, resulting in increased levels of the signaling molecule cAMP. GNAS functions downstream of several GPCRs, including beta-adrenergic receptors. XLas isoforms interact with the same set of receptors as Gnas isoforms. This chain is Guanine nucleotide-binding protein G(s) subunit alpha isoforms XLas, found in Rattus norvegicus (Rat).